Here is a 434-residue protein sequence, read N- to C-terminus: 3-phosphoshikimate 1-carboxyvinyltransferase (434 aa).

3-phosphoshikimate is bound by residues lysine 22, serine 23, and arginine 27. A phosphoenolpyruvate-binding site is contributed by lysine 22. 2 residues coordinate phosphoenolpyruvate: glycine 93 and arginine 121. 6 residues coordinate 3-phosphoshikimate: serine 168, serine 169, glutamine 170, serine 199, aspartate 320, and lysine 347. A phosphoenolpyruvate-binding site is contributed by glutamine 170. Residue aspartate 320 is the Proton acceptor of the active site. The phosphoenolpyruvate site is built by arginine 351, arginine 394, and lysine 419.

The protein belongs to the EPSP synthase family. As to quaternary structure, monomer.

The protein localises to the cytoplasm. The catalysed reaction is 3-phosphoshikimate + phosphoenolpyruvate = 5-O-(1-carboxyvinyl)-3-phosphoshikimate + phosphate. It functions in the pathway metabolic intermediate biosynthesis; chorismate biosynthesis; chorismate from D-erythrose 4-phosphate and phosphoenolpyruvate: step 6/7. Functionally, catalyzes the transfer of the enolpyruvyl moiety of phosphoenolpyruvate (PEP) to the 5-hydroxyl of shikimate-3-phosphate (S3P) to produce enolpyruvyl shikimate-3-phosphate and inorganic phosphate. This chain is 3-phosphoshikimate 1-carboxyvinyltransferase, found in Paraburkholderia phytofirmans (strain DSM 17436 / LMG 22146 / PsJN) (Burkholderia phytofirmans).